A 914-amino-acid chain; its full sequence is Protein GAMETE EXPRESSED 2 (914 aa).

Filamin repeat units follow at residues 249-382 and 391-485; these read IGYC…IKEV and ACSV…DVNV. Residues 893 to 913 traverse the membrane as a helical segment; the sequence is LVVVPFSFFSIKLFSLLMVLI.

As to expression, in tricellular pollen, expressed in mature sperm cells but not in the vegetative cell. In bicellular pollen, detected in the progenitor generative cell. Detected in the egg cell within the female gametophyte.

It localises to the cell membrane. The sequence is that of Protein GAMETE EXPRESSED 2 (GEX2) from Arabidopsis thaliana (Mouse-ear cress).